The primary structure comprises 274 residues: MSTGWHAELELRFEHNREVTRLMRRRHVGPLAVQQPFYPEKDGSAHVYLLHPPGGVAGDDVLDISCFLGRGARAVLTTPGATKFYRSERGQSTQTTRIDVGEGGICEYLPQETIVFDGAKASIGTKVFLSGDAVYLGWDIISLGRPACQESFDTGEVRQRIEIFRDGKPIWFEQFRLHGADPALNAAFAFCAKPIVATMVYAGPADESALHAIREAVGDAARNLFSVSRLERVIVCRYLGGRMSEAKTLFRKAWEVLRETGLGKPAAAPRIWAT.

It belongs to the UreD family. UreD, UreF and UreG form a complex that acts as a GTP-hydrolysis-dependent molecular chaperone, activating the urease apoprotein by helping to assemble the nickel containing metallocenter of UreC. The UreE protein probably delivers the nickel.

It is found in the cytoplasm. Functionally, required for maturation of urease via the functional incorporation of the urease nickel metallocenter. The sequence is that of Urease accessory protein UreD 2 from Brucella anthropi (strain ATCC 49188 / DSM 6882 / CCUG 24695 / JCM 21032 / LMG 3331 / NBRC 15819 / NCTC 12168 / Alc 37) (Ochrobactrum anthropi).